The chain runs to 347 residues: tRNA dimethylallyltransferase (347 aa).

20-27 (GPTASGKT) is an ATP binding site. A substrate-binding site is contributed by 22 to 27 (TASGKT). 3 interaction with substrate tRNA regions span residues 45 to 48 (DSAM), 169 to 173 (QRLMR), and 275 to 280 (RCVGYR).

It belongs to the IPP transferase family. As to quaternary structure, monomer. Requires Mg(2+) as cofactor.

It carries out the reaction adenosine(37) in tRNA + dimethylallyl diphosphate = N(6)-dimethylallyladenosine(37) in tRNA + diphosphate. Its function is as follows. Catalyzes the transfer of a dimethylallyl group onto the adenine at position 37 in tRNAs that read codons beginning with uridine, leading to the formation of N6-(dimethylallyl)adenosine (i(6)A). This Marinobacter nauticus (strain ATCC 700491 / DSM 11845 / VT8) (Marinobacter aquaeolei) protein is tRNA dimethylallyltransferase.